A 496-amino-acid polypeptide reads, in one-letter code: Aspartyl/glutamyl-tRNA(Asn/Gln) amidotransferase subunit B (496 aa).

The segment at 475-496 is disordered; it reads TGGSADPSKVNTLLREQLEDKK.

The protein belongs to the GatB/GatE family. GatB subfamily. As to quaternary structure, heterotrimer of A, B and C subunits.

It catalyses the reaction L-glutamyl-tRNA(Gln) + L-glutamine + ATP + H2O = L-glutaminyl-tRNA(Gln) + L-glutamate + ADP + phosphate + H(+). The catalysed reaction is L-aspartyl-tRNA(Asn) + L-glutamine + ATP + H2O = L-asparaginyl-tRNA(Asn) + L-glutamate + ADP + phosphate + 2 H(+). Its function is as follows. Allows the formation of correctly charged Asn-tRNA(Asn) or Gln-tRNA(Gln) through the transamidation of misacylated Asp-tRNA(Asn) or Glu-tRNA(Gln) in organisms which lack either or both of asparaginyl-tRNA or glutaminyl-tRNA synthetases. The reaction takes place in the presence of glutamine and ATP through an activated phospho-Asp-tRNA(Asn) or phospho-Glu-tRNA(Gln). The polypeptide is Aspartyl/glutamyl-tRNA(Asn/Gln) amidotransferase subunit B (Haloquadratum walsbyi (strain DSM 16790 / HBSQ001)).